The primary structure comprises 414 residues: Imidazolonepropionase (414 aa).

The span at Met1 to Pro20 shows a compositional bias: polar residues. The segment at Met1–Gln26 is disordered. 2 residues coordinate Fe(3+): His81 and His83. Positions 81 and 83 each coordinate Zn(2+). 4-imidazolone-5-propanoate-binding residues include Arg90, Tyr153, and His186. An N-formimidoyl-L-glutamate-binding site is contributed by Tyr153. Fe(3+) is bound at residue His251. His251 lines the Zn(2+) pocket. Glu254 provides a ligand contact to 4-imidazolone-5-propanoate. Asp325 provides a ligand contact to Fe(3+). Asp325 contributes to the Zn(2+) binding site. The N-formimidoyl-L-glutamate site is built by Asn327 and Gly329. Ser330 provides a ligand contact to 4-imidazolone-5-propanoate.

The protein belongs to the metallo-dependent hydrolases superfamily. HutI family. Zn(2+) serves as cofactor. Fe(3+) is required as a cofactor.

It localises to the cytoplasm. It carries out the reaction 4-imidazolone-5-propanoate + H2O = N-formimidoyl-L-glutamate. Its pathway is amino-acid degradation; L-histidine degradation into L-glutamate; N-formimidoyl-L-glutamate from L-histidine: step 3/3. In terms of biological role, catalyzes the hydrolytic cleavage of the carbon-nitrogen bond in imidazolone-5-propanoate to yield N-formimidoyl-L-glutamate. It is the third step in the universal histidine degradation pathway. The polypeptide is Imidazolonepropionase (Desulfotalea psychrophila (strain LSv54 / DSM 12343)).